Consider the following 1154-residue polypeptide: PDZ domain-containing protein 8 (1154 aa).

The helical transmembrane segment at 2–24 (GLLLMILASAVLGSFLTLLAQFF) threads the bilayer. Residues 66–90 (DEEPSGAAPEGGATPTAAPETPAPP) are disordered. Positions 70 to 85 (SGAAPEGGATPTAAPE) are enriched in low complexity. Residues 91–294 (TRETCYFLNA…LPNYKIRFKP (204 aa)) enclose the SMP-LTD domain. The PDZ domain maps to 366 to 449 (TVELIKGNLQ…RVLVYYERPV (84 aa)). Ser-496, Ser-521, and Ser-538 each carry phosphoserine. The disordered stretch occupies residues 548-612 (GSHPLPPKIQ…SADAPNQAEP (65 aa)). Residues 840–891 (KHSFQDTQFQNPTWCDYCKKKVWTKAASQCMFCAYVCHKKCQEKCLAETSVC) form a Phorbol-ester/DAG-type zinc finger. Residues 955–999 (RLSEPGTDLVEPSPKHTPNTSDNEGSDTEVCGPNSPSKRGNSTGI) form a disordered region. A phosphoserine mark is found at Ser-967 and Ser-980. The span at 988 to 998 (NSPSKRGNSTG) shows a compositional bias: polar residues. The stretch at 1028–1063 (PTEERIQKLEFMLDKLQNEIDQELEHNNSLVREEKE) forms a coiled coil. Polar residues predominate over residues 1132 to 1144 (SQLIDSQPFSSIS). The disordered stretch occupies residues 1132-1154 (SQLIDSQPFSSISDDLFGPSESV).

Interacts with MSN. In terms of assembly, (Microbial infection) Interacts with HIV-1 Gag polyprotein p55.

It localises to the endoplasmic reticulum membrane. Functionally, molecular tethering protein that connects endoplasmic reticulum and mitochondria membranes. PDZD8-dependent endoplasmic reticulum-mitochondria membrane tethering is essential for endoplasmic reticulum-mitochondria Ca(2+) transfer. In neurons, involved in the regulation of dendritic Ca(2+) dynamics by regulating mitochondrial Ca(2+) uptake in neurons. Plays an indirect role in the regulation of cell morphology and cytoskeletal organization. May inhibit herpes simplex virus 1 infection at an early stage. In Homo sapiens (Human), this protein is PDZ domain-containing protein 8.